The following is a 364-amino-acid chain: tRNA 2-selenouridine synthase (364 aa).

A Rhodanese domain is found at 12-135 (FLNDRPMMDT…MRTFLLDTTE (124 aa)). Cysteine 95 functions as the S-selanylcysteine intermediate in the catalytic mechanism.

Belongs to the SelU family. In terms of assembly, monomer.

It carries out the reaction 5-methylaminomethyl-2-thiouridine(34) in tRNA + selenophosphate + (2E)-geranyl diphosphate + H2O + H(+) = 5-methylaminomethyl-2-selenouridine(34) in tRNA + (2E)-thiogeraniol + phosphate + diphosphate. The enzyme catalyses 5-methylaminomethyl-2-thiouridine(34) in tRNA + (2E)-geranyl diphosphate = 5-methylaminomethyl-S-(2E)-geranyl-thiouridine(34) in tRNA + diphosphate. The catalysed reaction is 5-methylaminomethyl-S-(2E)-geranyl-thiouridine(34) in tRNA + selenophosphate + H(+) = 5-methylaminomethyl-2-(Se-phospho)selenouridine(34) in tRNA + (2E)-thiogeraniol. It catalyses the reaction 5-methylaminomethyl-2-(Se-phospho)selenouridine(34) in tRNA + H2O = 5-methylaminomethyl-2-selenouridine(34) in tRNA + phosphate. In terms of biological role, involved in the post-transcriptional modification of the uridine at the wobble position (U34) of tRNA(Lys), tRNA(Glu) and tRNA(Gln). Catalyzes the conversion of 2-thiouridine (S2U-RNA) to 2-selenouridine (Se2U-RNA). Acts in a two-step process involving geranylation of 2-thiouridine (S2U) to S-geranyl-2-thiouridine (geS2U) and subsequent selenation of the latter derivative to 2-selenouridine (Se2U) in the tRNA chain. This chain is tRNA 2-selenouridine synthase, found in Pseudomonas fluorescens (strain ATCC BAA-477 / NRRL B-23932 / Pf-5).